The primary structure comprises 293 residues: Small ribosomal subunit protein uS5 (293 aa).

The segment at 1 to 56 (MADDAGAAGGPGGPGGPGMGNRGGFRGGFGSGIRGRGRGRGRGRGRGRGARGGKAE) is disordered. Alanine 2 is modified (N-acetylalanine). Over residues 7–34 (AAGGPGGPGGPGMGNRGGFRGGFGSGIR) the composition is skewed to gly residues. Over residues 35–51 (GRGRGRGRGRGRGRGAR) the composition is skewed to basic residues. Residues lysine 54 and lysine 58 each participate in a glycyl lysine isopeptide (Lys-Gly) (interchain with G-Cter in ubiquitin) cross-link. An S5 DRBM domain is found at 102-165 (LKDEVLKIMP…ILAKLSIVPV (64 aa)). Residue threonine 252 is modified to Phosphothreonine. Position 263 is an N6-acetyllysine (lysine 263). Position 264 is a phosphoserine (serine 264). Threonine 270 carries the phosphothreonine modification. Lysine 275 is modified (N6-acetyllysine; alternate). A Glycyl lysine isopeptide (Lys-Gly) (interchain with G-Cter in SUMO1); alternate cross-link involves residue lysine 275. A Glycyl lysine isopeptide (Lys-Gly) (interchain with G-Cter in SUMO2); alternate cross-link involves residue lysine 275. Residue lysine 275 forms a Glycyl lysine isopeptide (Lys-Gly) (interchain with G-Cter in ubiquitin); alternate linkage. Serine 281 is subject to Phosphoserine.

This sequence belongs to the universal ribosomal protein uS5 family. In terms of assembly, component of the small ribosomal subunit. Interacts with zinc finger protein ZNF277 (via zinc-finger domains); the interaction is direct; the interaction is extra-ribosomal. Interaction with ZNF277 competes with the binding of RPS2 to protein arginine methyltransferase PRMT3. In terms of processing, citrullinated by PADI4 in the Arg/Gly-rich region. Post-translationally, asymmetric arginine dimethylation by PRMT3 occurs at multiple sites in the Arg/Gly-rich region. Monoubiquitinated at Lys-54 and Lys-58 by RNF10 when a ribosome has stalled during translation, leading to its degradation by the proteasome. Deubiquitinated at Lys-54 and Lys-58 by USP10, preventing degradation by the proteasome and promoting 40S ribosome subunit recycling following ribosome dissociation.

It is found in the cytoplasm. Its subcellular location is the nucleus. The protein localises to the nucleolus. Functionally, component of the ribosome, a large ribonucleoprotein complex responsible for the synthesis of proteins in the cell. The small ribosomal subunit (SSU) binds messenger RNAs (mRNAs) and translates the encoded message by selecting cognate aminoacyl-transfer RNA (tRNA) molecules. The large subunit (LSU) contains the ribosomal catalytic site termed the peptidyl transferase center (PTC), which catalyzes the formation of peptide bonds, thereby polymerizing the amino acids delivered by tRNAs into a polypeptide chain. The nascent polypeptides leave the ribosome through a tunnel in the LSU and interact with protein factors that function in enzymatic processing, targeting, and the membrane insertion of nascent chains at the exit of the ribosomal tunnel. Plays a role in the assembly and function of the 40S ribosomal subunit. Mutations in this protein affects the control of translational fidelity. Involved in nucleolar processing of pre-18S ribosomal RNA and ribosome assembly. This chain is Small ribosomal subunit protein uS5 (RPS2), found in Homo sapiens (Human).